The chain runs to 601 residues: Dual specificity tyrosine-phosphorylation-regulated kinase 2 (601 aa).

Residues 1–24 (MLTRKPSAAAPAAYPTGRGGDSAV) form a disordered region. A Phosphoserine modification is found at Ser30. At Thr106 the chain carries Phosphothreonine; by ATM. The short motif at 189-191 (KKR) is the Nuclear localization signal element. In terms of domain architecture, Protein kinase spans 222–535 (YEVLKVIGKG…PGQALRHPWL (314 aa)). Residues 228-236 (IGKGSFGQV), Lys251, and 301-304 (FELL) each bind ATP. The active-site Proton acceptor is the Asp348. At Thr381 the chain carries Phosphothreonine; by MAP3K10. At Tyr382 the chain carries Phosphotyrosine; by autocatalysis. Ser442 bears the Phosphoserine; by ATM mark. Ser449 is modified (phosphoserine; by MAP3K10).

It belongs to the protein kinase superfamily. CMGC Ser/Thr protein kinase family. MNB/DYRK subfamily. As to quaternary structure, component of an E3 ligase complex containing DYRK2, EDD/UBR5, DDB1 and DCAF1 (EDVP complex). Interacts directly with EDD/UBR5, DDB1 and DCAF1. Interacts with SIAH2 and MDM2. Interacts with MAP3K10 and NFATC1. May also interact with CCNL2. The cofactor is Mg(2+). Mn(2+) serves as cofactor. Autophosphorylates cotranslationally on the second tyrosine residue in the Tyr-X-Tyr motif in the activation loop, but once mature, does not have any protein tyrosine kinase activity. Phosphorylated at Thr-106 and Ser-442 by ATM in response to genotoxic stress. Post-translationally, under normal conditions, polyubiquitinated in the nucleus by MDM2, leading to its proteasomal degradation. Phosphorylation on Thr-106 and Ser-442 by ATM in response to genotoxic stress disrupts MDM2 binding and prevents MDM2-mediated ubiquitination and subsequent proteasomal degradation. Polyubiquitinated by SIAH2, leading to its proteasomal degradation. Polyubiquitinated by SIAH2 occurs under normal conditions, and is enhanced in response to hypoxia. As to expression, testis, after the onset of spermatogenesis.

It is found in the cytoplasm. It localises to the nucleus. The catalysed reaction is L-seryl-[protein] + ATP = O-phospho-L-seryl-[protein] + ADP + H(+). It catalyses the reaction L-threonyl-[protein] + ATP = O-phospho-L-threonyl-[protein] + ADP + H(+). It carries out the reaction L-tyrosyl-[protein] + ATP = O-phospho-L-tyrosyl-[protein] + ADP + H(+). With respect to regulation, activated by autophosphorylation on the second tyrosine residue in the Tyr-X-Tyr motif in the activation loop. Inhibited by acridine analogs, purvalanol, and barely by harmine. Inhibited by leucettine and leucettine derivatives. Serine/threonine-protein kinase involved in the regulation of the mitotic cell cycle, cell proliferation, apoptosis, organization of the cytoskeleton and neurite outgrowth. Functions in part via its role in ubiquitin-dependent proteasomal protein degradation. Functions downstream of ATM and phosphorylates p53/TP53 at 'Ser-46', and thereby contributes to the induction of apoptosis in response to DNA damage. Phosphorylates NFATC1, and thereby inhibits its accumulation in the nucleus and its transcription factor activity. Phosphorylates EIF2B5 at 'Ser-544', enabling its subsequent phosphorylation and inhibition by GSK3B. Likewise, phosphorylation of NFATC1, CRMP2/DPYSL2 and CRMP4/DPYSL3 promotes their subsequent phosphorylation by GSK3B. May play a general role in the priming of GSK3 substrates. Inactivates GYS1 by phosphorylation at 'Ser-641', and potentially also a second phosphorylation site, thus regulating glycogen synthesis. Mediates EDVP E3 ligase complex formation and is required for the phosphorylation and subsequent degradation of KATNA1. Phosphorylates TERT at 'Ser-457', promoting TERT ubiquitination by the EDVP complex. Phosphorylates SIAH2, and thereby increases its ubiquitin ligase activity. Promotes the proteasomal degradation of MYC and JUN, and thereby regulates progress through the mitotic cell cycle and cell proliferation. Promotes proteasomal degradation of GLI2 and GLI3, and thereby plays a role in smoothened and sonic hedgehog signaling. Plays a role in cytoskeleton organization and neurite outgrowth via its phosphorylation of DCX and DPYSL2. Phosphorylates CRMP2/DPYSL2, CRMP4/DPYSL3, DCX, EIF2B5, EIF4EBP1, GLI2, GLI3, GYS1, JUN, MDM2, MYC, NFATC1, p53/TP53, TAU/MAPT and KATNA1. Can phosphorylate histone H1, histone H3 and histone H2B (in vitro). Can phosphorylate CARHSP1 (in vitro). In Homo sapiens (Human), this protein is Dual specificity tyrosine-phosphorylation-regulated kinase 2 (DYRK2).